Here is a 272-residue protein sequence, read N- to C-terminus: uncharacterized protein (272 aa).

The protein belongs to the chlamydial CPn_0389/CT_041/TC_0311 family.

This is an uncharacterized protein from Chlamydia pneumoniae (Chlamydophila pneumoniae).